A 1342-amino-acid chain; its full sequence is Receptor tyrosine-protein kinase erbB-3 (1342 aa).

The N-terminal stretch at Met-1–Gly-19 is a signal peptide. Topologically, residues Ser-20–Thr-643 are extracellular. A disulfide bridge links Cys-29 with Cys-56. Asn-126 carries an N-linked (GlcNAc...) asparagine glycan. Disulfide bonds link Cys-156-Cys-183, Cys-186-Cys-194, Cys-190-Cys-202, Cys-210-Cys-218, Cys-214-Cys-226, Cys-227-Cys-235, Cys-231-Cys-243, Cys-246-Cys-255, Cys-259-Cys-286, Cys-290-Cys-301, Cys-305-Cys-320, and Cys-323-Cys-327. Asn-250 carries N-linked (GlcNAc...) asparagine glycosylation. N-linked (GlcNAc...) asparagine glycans are attached at residues Asn-353, Asn-408, Asn-414, Asn-437, and Asn-469. 10 disulfide bridges follow: Cys-500–Cys-509, Cys-504–Cys-517, Cys-520–Cys-529, Cys-533–Cys-549, Cys-552–Cys-565, Cys-556–Cys-573, Cys-576–Cys-585, Cys-589–Cys-610, Cys-613–Cys-621, and Cys-617–Cys-629. The N-linked (GlcNAc...) asparagine glycan is linked to Asn-522. Asn-566 is a glycosylation site (N-linked (GlcNAc...) asparagine). N-linked (GlcNAc...) asparagine glycosylation is present at Asn-616. The chain crosses the membrane as a helical span at residues Met-644 to Leu-664. The Cytoplasmic segment spans residues Tyr-665–Thr-1342. Ser-686 carries the phosphoserine modification. In terms of domain architecture, Protein kinase spans Leu-709–Thr-966. Residues Leu-715 to Val-723, Lys-742, Gln-788 to Leu-790, and Asn-834 to Asn-839 contribute to the ATP site. Asn-834 functions as the Proton acceptor in the catalytic mechanism. 2 disordered regions span residues Arg-980 to Lys-999 and Leu-1033 to Glu-1152. Ser-982 is modified (phosphoserine). Positions Arg-1042–Ser-1075 are enriched in polar residues.

It belongs to the protein kinase superfamily. Tyr protein kinase family. EGF receptor subfamily. Monomer and homodimer. Heterodimer with each of the other ERBB receptors (Potential). Interacts with CSPG5. Interacts with GRB7. Interacts with MUC1. Interacts with MYOC. Interacts with isoform 2 of PA2G4. Found in a ternary complex with NRG1 and ITGAV:ITGB3 or ITGA6:ITGB4. Post-translationally, autophosphorylated. Ligand-binding increases phosphorylation on tyrosine residues and promotes its association with the p85 subunit of phosphatidylinositol 3-kinase. In terms of tissue distribution, epithelial tissues and brain.

The protein localises to the cell membrane. It is found in the secreted. It carries out the reaction L-tyrosyl-[protein] + ATP = O-phospho-L-tyrosyl-[protein] + ADP + H(+). Functionally, tyrosine-protein kinase that plays an essential role as cell surface receptor for neuregulins. Binds to neuregulin-1 (NRG1) and is activated by it; ligand-binding increases phosphorylation on tyrosine residues and promotes its association with the p85 subunit of phosphatidylinositol 3-kinase. May also be activated by CSPG5. Involved in the regulation of myeloid cell differentiation. The protein is Receptor tyrosine-protein kinase erbB-3 (ERBB3) of Homo sapiens (Human).